A 214-amino-acid chain; its full sequence is Ribosomal RNA large subunit methyltransferase E (214 aa).

The S-adenosyl-L-methionine site is built by Gly68, Trp70, Asp88, Asp104, and Asp129. The active-site Proton acceptor is the Lys169.

This sequence belongs to the class I-like SAM-binding methyltransferase superfamily. RNA methyltransferase RlmE family.

Its subcellular location is the cytoplasm. It carries out the reaction uridine(2552) in 23S rRNA + S-adenosyl-L-methionine = 2'-O-methyluridine(2552) in 23S rRNA + S-adenosyl-L-homocysteine + H(+). Its function is as follows. Specifically methylates the uridine in position 2552 of 23S rRNA at the 2'-O position of the ribose in the fully assembled 50S ribosomal subunit. In Magnetococcus marinus (strain ATCC BAA-1437 / JCM 17883 / MC-1), this protein is Ribosomal RNA large subunit methyltransferase E.